The chain runs to 129 residues: MAKEAARVRRRERKNISSGVAHVNSTFNNTMITITDAQGNAIAWSSAGAQGFKGSRKSTPFAAQVAAEDCARKAQEHGMRTLEVEVSGPGSGRESALRALQAAGFTITSIRDVTPIPHNGCRPRKKRRV.

This sequence belongs to the universal ribosomal protein uS11 family. In terms of assembly, part of the 30S ribosomal subunit. Interacts with proteins S7 and S18. Binds to IF-3.

Its function is as follows. Located on the platform of the 30S subunit, it bridges several disparate RNA helices of the 16S rRNA. Forms part of the Shine-Dalgarno cleft in the 70S ribosome. In Chelativorans sp. (strain BNC1), this protein is Small ribosomal subunit protein uS11.